The chain runs to 345 residues: Src kinase-associated phosphoprotein 1 (345 aa).

Positions 109–212 (KIFKQGYLER…WVEQIQFLVK (104 aa)) constitute a PH domain. The interval 226 to 274 (ETYDDIESTESSPVVGLTNDSENSLQEDDVYESIPGDEETEESEDENYE) is disordered. Positions 250 to 272 (LQEDDVYESIPGDEETEESEDEN) are enriched in acidic residues. Positions 283–344 (FYGDYYQGLW…PKDYLTLAFD (62 aa)) constitute an SH3 domain.

It belongs to the SKAP family. Homodimer. In terms of processing, phosphorylated on tyrosines.

The protein localises to the cytoplasm. Its subcellular location is the nucleus. It localises to the cell membrane. Positively regulates T-cell receptor signaling. Required for optimal conjugation between T-cells and antigen-presenting cells. The sequence is that of Src kinase-associated phosphoprotein 1 (skap1) from Xenopus tropicalis (Western clawed frog).